The following is a 561-amino-acid chain: DNA ligase B (561 aa).

The active-site N6-AMP-lysine intermediate is the lysine 124.

The protein belongs to the NAD-dependent DNA ligase family. LigB subfamily.

The enzyme catalyses NAD(+) + (deoxyribonucleotide)n-3'-hydroxyl + 5'-phospho-(deoxyribonucleotide)m = (deoxyribonucleotide)n+m + AMP + beta-nicotinamide D-nucleotide.. Functionally, catalyzes the formation of phosphodiester linkages between 5'-phosphoryl and 3'-hydroxyl groups in double-stranded DNA using NAD as a coenzyme and as the energy source for the reaction. In Cronobacter sakazakii (strain ATCC BAA-894) (Enterobacter sakazakii), this protein is DNA ligase B.